Here is a 261-residue protein sequence, read N- to C-terminus: Indole-3-glycerol phosphate synthase (261 aa).

This sequence belongs to the TrpC family.

It carries out the reaction 1-(2-carboxyphenylamino)-1-deoxy-D-ribulose 5-phosphate + H(+) = (1S,2R)-1-C-(indol-3-yl)glycerol 3-phosphate + CO2 + H2O. It participates in amino-acid biosynthesis; L-tryptophan biosynthesis; L-tryptophan from chorismate: step 4/5. The protein is Indole-3-glycerol phosphate synthase of Burkholderia mallei (strain NCTC 10247).